The following is a 430-amino-acid chain: MAMATRTLGFVLPTSLSSQPSFDRRGGGFRVSVIRCSTSPLTFPTSGVVEKPWTSYNARLVLEDGSIWPAKSFGAPGTRIAELVFNTSLTGYQEILTDPSYAGQFVLMTNPQIGNTGVNPDDEESGQCFLTGLVIRNLSISTSNWRCTKTLADYLTERDIMGVYDLDTRAITRRLREDGSLIGVLSTEQSKTDDELLQMSRSWDIVGIDLISDVSCKSPYEWVDKTNAEWDFNTNSRDGKSYKVIAYDFGIKQNILRRLSSYGCQITVVPSTFPAAEALKMNPDGILFSNGPGDPSAVPYAVETVKELLGKVPVYGICMGHQLLGQALGGKTFKMKFGHHGGNHPVRNNRTGQVEISAQNHNYAVDPASLPGGVEVTHVNLNDGSCAGLSFPEMNVMSLQYHPEASPGPHDSDNAFREFIELMKRSKQSS.

Residues 1–35 (MAMATRTLGFVLPTSLSSQPSFDRRGGGFRVSVIR) constitute a chloroplast transit peptide. The region spanning 243–429 (KVIAYDFGIK…IELMKRSKQS (187 aa)) is the Glutamine amidotransferase type-1 domain. The Nucleophile role is filled by Cys318. Residues His402 and Glu404 contribute to the active site.

This sequence belongs to the CarA family. In terms of assembly, heterodimer composed of 2 chains; the small (or glutamine) chain promotes the hydrolysis of glutamine to ammonia, which is used by the large (or ammonia) chain to synthesize carbamoyl phosphate.

It localises to the plastid. It is found in the chloroplast. It catalyses the reaction hydrogencarbonate + L-glutamine + 2 ATP + H2O = carbamoyl phosphate + L-glutamate + 2 ADP + phosphate + 2 H(+). It carries out the reaction L-glutamine + H2O = L-glutamate + NH4(+). It functions in the pathway amino-acid biosynthesis; L-arginine biosynthesis; carbamoyl phosphate from bicarbonate: step 1/1. Its pathway is pyrimidine metabolism; UMP biosynthesis via de novo pathway; (S)-dihydroorotate from bicarbonate: step 1/3. Its function is as follows. Small subunit of the arginine-specific carbamoyl phosphate synthase (CPSase). CPSase catalyzes the formation of carbamoyl phosphate from the ammonia moiety of glutamine, carbonate, and phosphate donated by ATP, the first step of the arginine biosynthetic pathway. The small subunit (glutamine amidotransferase) binds and cleaves glutamine to supply the large subunit with the substrate ammonia. In Arabidopsis thaliana (Mouse-ear cress), this protein is Carbamoyl phosphate synthase small chain, chloroplastic (CARA).